A 415-amino-acid chain; its full sequence is Branched-chain-amino-acid aminotransferase 5, chloroplastic (415 aa).

The transit peptide at 1–65 directs the protein to the chloroplast; the sequence is MERSAVASGF…IVSEVSRNRR (65 aa). Lys261 bears the N6-(pyridoxal phosphate)lysine mark.

This sequence belongs to the class-IV pyridoxal-phosphate-dependent aminotransferase family. Pyridoxal 5'-phosphate is required as a cofactor.

Its subcellular location is the plastid. The protein localises to the chloroplast. It catalyses the reaction L-leucine + 2-oxoglutarate = 4-methyl-2-oxopentanoate + L-glutamate. The catalysed reaction is L-isoleucine + 2-oxoglutarate = (S)-3-methyl-2-oxopentanoate + L-glutamate. The enzyme catalyses L-valine + 2-oxoglutarate = 3-methyl-2-oxobutanoate + L-glutamate. Its pathway is amino-acid biosynthesis; L-isoleucine biosynthesis; L-isoleucine from 2-oxobutanoate: step 4/4. The protein operates within amino-acid biosynthesis; L-leucine biosynthesis; L-leucine from 3-methyl-2-oxobutanoate: step 4/4. It participates in amino-acid biosynthesis; L-valine biosynthesis; L-valine from pyruvate: step 4/4. Its function is as follows. Converts 2-oxo acids to branched-chain amino acids. Acts on leucine, isoleucine and valine. The protein is Branched-chain-amino-acid aminotransferase 5, chloroplastic (BCAT5) of Arabidopsis thaliana (Mouse-ear cress).